Here is a 219-residue protein sequence, read N- to C-terminus: Trafficking protein particle complex subunit 4 (219 aa).

It belongs to the TRAPP small subunits family. TRAPPC4 subfamily. Component of the multisubunit TRAPP (transport protein particle) complex, which includes at least TRAPPC2, TRAPPC2L, TRAPPC3, TRAPPC3L, TRAPPC4, TRAPPC5, TRAPPC8, TRAPPC9, TRAPPC10, TRAPPC11 and TRAPPC12. Interacts with SDC2. As to expression, widely expressed.

The protein resides in the postsynaptic cell membrane. It localises to the golgi apparatus membrane. The protein localises to the endoplasmic reticulum. It is found in the vesicle. Functionally, core component of the TRAPP complexes which has a function of guanine nucleotide exchange factor activity for Rab1 GTPase. Plays a role in vesicular transport from endoplasmic reticulum to Golgi and autophagy. May play a role in dendrite postsynaptic membrane trafficking. This chain is Trafficking protein particle complex subunit 4, found in Mus musculus (Mouse).